The following is a 653-amino-acid chain: Fructose-1,6-bisphosphatase class 3 (653 aa).

The protein belongs to the FBPase class 3 family. Mn(2+) serves as cofactor.

It carries out the reaction beta-D-fructose 1,6-bisphosphate + H2O = beta-D-fructose 6-phosphate + phosphate. The protein operates within carbohydrate biosynthesis; gluconeogenesis. The polypeptide is Fructose-1,6-bisphosphatase class 3 (Listeria monocytogenes serotype 4b (strain CLIP80459)).